Consider the following 95-residue polypeptide: Ribonuclease kappa (95 aa).

2 helical membrane-spanning segments follow: residues 12-32 (GLIISVWGIVQLVLMGLFFYI) and 68-88 (CWIAACIYVLTLLLSAQQFYM).

The protein belongs to the RNase K family.

It localises to the membrane. Its function is as follows. Endoribonuclease. (Microbial infection) Required for the initial stages of clathrin-mediated endocytic uptake of a diverse set of flaviviruses, including dengue and West Nile. Not required for clathrin-mediated endocytosis and macropinocytosis. In Drosophila melanogaster (Fruit fly), this protein is Ribonuclease kappa.